Consider the following 256-residue polypeptide: 5'-nucleotidase SurE (256 aa).

Residues aspartate 8, aspartate 9, serine 39, and asparagine 95 each coordinate a divalent metal cation.

Belongs to the SurE nucleotidase family. A divalent metal cation serves as cofactor.

The protein localises to the cytoplasm. The catalysed reaction is a ribonucleoside 5'-phosphate + H2O = a ribonucleoside + phosphate. Functionally, nucleotidase that shows phosphatase activity on nucleoside 5'-monophosphates. This Methanosphaera stadtmanae (strain ATCC 43021 / DSM 3091 / JCM 11832 / MCB-3) protein is 5'-nucleotidase SurE.